The primary structure comprises 352 residues: RAD51-associated protein 1 (352 aa).

A compositionally biased stretch (basic residues) spans 1 to 10 (MVRPVRHKKP). Disordered regions lie at residues 1-78 (MVRP…TFSI) and 115-144 (TNVQNSQDKSIEKHGSSKIETMNKSPHISN). Phosphoserine is present on residues Ser-19 and Ser-21. An interaction with DNA region spans residues 30–49 (VPLNKKSRTAPKELKQDKPK). A compositionally biased stretch (basic and acidic residues) spans 39 to 72 (APKELKQDKPKPNLNNLRKEEIPVQEKTPKKRLP). A Phosphothreonine modification is found at Thr-66. 2 positions are modified to phosphoserine: Ser-120 and Ser-124. Positions 132 to 144 (KIETMNKSPHISN) are enriched in polar residues. Residues 154–159 (LDKITV) carry the SIM motif motif. The interval 162–323 (DVGGVQGKRK…RSSSSPLVVV (162 aa)) is disordered. A compositionally biased stretch (acidic residues) spans 188 to 221 (SDGDSANDTEPDFAPGEDSEDDSDFCESEDNDED). A compositionally biased stretch (basic and acidic residues) spans 229–247 (VKEIKKKEVKVKSPVEKKE). Residues 243 to 304 (VEKKEKKSKS…PSAESKKPKW (62 aa)) form an interaction with DNA region. Lys-251 is covalently cross-linked (Glycyl lysine isopeptide (Lys-Gly) (interchain with G-Cter in ubiquitin; alternate)). Residue Lys-269 forms a Glycyl lysine isopeptide (Lys-Gly) (interchain with G-Cter in SUMO) linkage. Polar residues predominate over residues 270-284 (SESQSLPKKVSLSSD). Phosphoserine is present on Ser-280. Positions 304–307 (WVPP) match the WVPP motif motif. A compositionally biased stretch (low complexity) spans 306–323 (PPAASGGSRSSSSPLVVV). Residues 313 to 352 (SRSSSSPLVVVSVKSPNQSLRLGLSRLARVKPLHPNATST) form an interaction with RAD51 region. Ser-327 carries the post-translational modification Phosphoserine.

In terms of assembly, monomer; elongated monodisperse monomer. Interacts (via C-terminal region) with RAD51; the interaction is direct. Interacts (via SIM motif) with WDR48/UAF1; WDR48/UAF1 and RAD51AP1 cooperate together to stimulate RAD51-mediated homologous recombination (HR). Interacts (via WVPP motif) with DMC1; the interaction is direct. Interacts with PALB2. Interacts with RAD52. Does not interact with DMC1; lack of interaction is caused by the absence of the WVPP motif in this isoform. Post-translationally, sumoylation with SUMO2/3 by NSMCE2/MMS21 promotes stabilization, possibly by preventing ubiquitination. Sumoylation is required for alternative lengthening of telomeres (ALT) pathway. In terms of tissue distribution, highly expressed in testis and thymus. Lower levels in colon and small intestine. Little or no expression in spleen, prostate, ovary and peripheral blood leukocytes.

It is found in the chromosome. Its subcellular location is the nucleus. The protein resides in the telomere. Structure-specific DNA-binding protein involved in DNA repair by promoting RAD51-mediated homologous recombination. Acts by stimulating D-Loop formation by RAD51: specifically enhances joint molecule formation through its structure-specific DNA interaction and its interaction with RAD51. Binds single-stranded DNA (ssDNA), double-stranded DNA (dsDNA) and secondary DNA structures, such as D-loop structures: has a strong preference for branched-DNA structures that are obligatory intermediates during joint molecule formation. Cooperates with WDR48/UAF1 to stimulate RAD51-mediated homologous recombination: both WDR48/UAF1 and RAD51AP1 have coordinated role in DNA-binding during homologous recombination and DNA repair. WDR48/UAF1 and RAD51AP1 also have a coordinated role in DNA-binding to promote USP1-mediated deubiquitination of FANCD2. Also involved in meiosis by promoting DMC1-mediated homologous meiotic recombination. Key mediator of alternative lengthening of telomeres (ALT) pathway, a homology-directed repair mechanism of telomere elongation that controls proliferation in aggressive cancers, by stimulating homologous recombination. May also bind RNA; additional evidences are however required to confirm RNA-binding in vivo. This chain is RAD51-associated protein 1, found in Homo sapiens (Human).